The chain runs to 142 residues: Large ribosomal subunit protein uL11 (142 aa).

The protein belongs to the universal ribosomal protein uL11 family. In terms of assembly, part of the ribosomal stalk of the 50S ribosomal subunit. Interacts with L10 and the large rRNA to form the base of the stalk. L10 forms an elongated spine to which L12 dimers bind in a sequential fashion forming a multimeric L10(L12)X complex. In terms of processing, one or more lysine residues are methylated.

Functionally, forms part of the ribosomal stalk which helps the ribosome interact with GTP-bound translation factors. This chain is Large ribosomal subunit protein uL11, found in Edwardsiella ictaluri (strain 93-146).